Here is a 270-residue protein sequence, read N- to C-terminus: Very long chain fatty acid elongase 3 (270 aa).

The N-linked (GlcNAc...) asparagine glycan is linked to Asn-6. 2 helical membrane-spanning segments follow: residues 29–49 (FFEE…VLIA) and 63–83 (LQGP…LGAV). N-linked (GlcNAc...) asparagine glycosylation occurs at Asn-110. 5 helical membrane-spanning segments follow: residues 115-135 (FWSW…AFII), 140-160 (PLIF…SFGY), 164-184 (VPAG…MYTY), 198-218 (LPML…IVSI), and 235-255 (HLFW…HFFC). The Di-lysine motif signature appears at 266–270 (KTKSQ).

The protein belongs to the ELO family. ELOVL3 subfamily. Interacts with TECR. Post-translationally, N-Glycosylated. In terms of tissue distribution, testis.

Its subcellular location is the endoplasmic reticulum membrane. The catalysed reaction is a very-long-chain acyl-CoA + malonyl-CoA + H(+) = a very-long-chain 3-oxoacyl-CoA + CO2 + CoA. The enzyme catalyses eicosanoyl-CoA + malonyl-CoA + H(+) = 3-oxodocosanoyl-CoA + CO2 + CoA. It catalyses the reaction hexadecanoyl-CoA + malonyl-CoA + H(+) = 3-oxooctadecanoyl-CoA + CO2 + CoA. It carries out the reaction octadecanoyl-CoA + malonyl-CoA + H(+) = 3-oxoeicosanoyl-CoA + CO2 + CoA. The catalysed reaction is (9Z)-octadecenoyl-CoA + malonyl-CoA + H(+) = 3-oxo-(11Z)-eicosenoyl-CoA + CO2 + CoA. The enzyme catalyses (9Z,12Z)-octadecadienoyl-CoA + malonyl-CoA + H(+) = (11Z,14Z)-3-oxoicosa-11,14-dienoyl-CoA + CO2 + CoA. It catalyses the reaction (9Z,12Z,15Z)-octadecatrienoyl-CoA + malonyl-CoA + H(+) = (11Z,14Z,17Z)-3-oxoeicosatrienoyl-CoA + CO2 + CoA. It carries out the reaction docosanoyl-CoA + malonyl-CoA + H(+) = 3-oxotetracosanoyl-CoA + CO2 + CoA. The catalysed reaction is tetradecanoyl-CoA + malonyl-CoA + H(+) = 3-oxohexadecanoyl-CoA + CO2 + CoA. It functions in the pathway lipid metabolism; polyunsaturated fatty acid biosynthesis. Functionally, catalyzes the first and rate-limiting reaction of the four reactions that constitute the long-chain fatty acids elongation cycle. This endoplasmic reticulum-bound enzymatic process allows the addition of 2 carbons to the chain of long- and very long-chain fatty acids (VLCFAs) per cycle. Condensing enzyme that exhibits activity toward saturated and unsaturated acyl-CoA substrates with higher activity toward C18 acyl-CoAs, especially C18:0 acyl-CoAs. May participate in the production of saturated and monounsaturated VLCFAs of different chain lengths that are involved in multiple biological processes as precursors of membrane lipids and lipid mediators. The chain is Very long chain fatty acid elongase 3 from Homo sapiens (Human).